Reading from the N-terminus, the 146-residue chain is Large ribosomal subunit protein uL15 (146 aa).

The segment at 1–54 (MKLHELQPAAGSRKAPKRVGRGTGSGLGRNAGKGEKGQNARSGGGVRPGFEGGQ) is disordered. Composition is skewed to gly residues over residues 21–31 (RGTGSGLGRNA) and 42–52 (SGGGVRPGFEG).

This sequence belongs to the universal ribosomal protein uL15 family. In terms of assembly, part of the 50S ribosomal subunit.

In terms of biological role, binds to the 23S rRNA. In Clostridium botulinum (strain Eklund 17B / Type B), this protein is Large ribosomal subunit protein uL15.